Consider the following 306-residue polypeptide: Putative syntaxin-131 (306 aa).

N-acetylmethionine is present on methionine 1. Over 1–276 the chain is Cytoplasmic; that stretch reads MNDLLKGSLE…AVKSQKSSRK (276 aa). Residues 11 to 23 show a composition bias toward basic and acidic residues; sequence FSRDRSNRSDIES. The interval 11 to 35 is disordered; that stretch reads FSRDRSNRSDIESGHGPGNSGDLGL. Coiled-coil stretches lie at residues 35 to 72 and 134 to 162; these read LSGF…VTKA and KKKF…VERR. Positions 205–267 constitute a t-SNARE coiled-coil homology domain; that stretch reads LAEIQERHDA…QSGNNQLTKA (63 aa). A helical; Anchor for type IV membrane protein transmembrane segment spans residues 277 to 297; that stretch reads WMCIAILILLIIIIITVISVL. At 298 to 306 the chain is on the vesicular side; it reads KPWTQKNGA.

It belongs to the syntaxin family. As to quaternary structure, part of the t-SNARE complex.

Its subcellular location is the membrane. In terms of biological role, vesicle trafficking protein that functions in the secretory pathway. The protein is Putative syntaxin-131 (SYP131) of Arabidopsis thaliana (Mouse-ear cress).